We begin with the raw amino-acid sequence, 146 residues long: Ribonuclease H (146 aa).

The 143-residue stretch at 1–143 (MKKQVTIYTD…CDQLAREAIK (143 aa)) folds into the RNase H type-1 domain. Mg(2+) contacts are provided by aspartate 10, glutamate 48, aspartate 70, and aspartate 135.

The protein belongs to the RNase H family. Monomer. The cofactor is Mg(2+).

It localises to the cytoplasm. The enzyme catalyses Endonucleolytic cleavage to 5'-phosphomonoester.. Endonuclease that specifically degrades the RNA of RNA-DNA hybrids. The sequence is that of Ribonuclease H from Chlorobium chlorochromatii (strain CaD3).